The following is a 437-amino-acid chain: Enolase 2 (437 aa).

K60 participates in a covalent cross-link: Glycyl lysine isopeptide (Lys-Gly) (interchain with G-Cter in ubiquitin). At S138 the chain carries Phosphoserine. H160 is an active-site residue. Position 188 is a phosphoserine (S188). K243 is covalently cross-linked (Glycyl lysine isopeptide (Lys-Gly) (interchain with G-Cter in ubiquitin)). Residues D247 and E296 each contribute to the Mg(2+) site. T313 is subject to Phosphothreonine. Residue D321 participates in Mg(2+) binding. A Phosphothreonine modification is found at T324. K358 participates in a covalent cross-link: Glycyl lysine isopeptide (Lys-Gly) (interchain with G-Cter in ubiquitin).

Belongs to the enolase family. In terms of assembly, homodimer. Requires Mg(2+) as cofactor.

It localises to the cytoplasm. It catalyses the reaction (2R)-2-phosphoglycerate = phosphoenolpyruvate + H2O. The protein operates within carbohydrate degradation; glycolysis; pyruvate from D-glyceraldehyde 3-phosphate: step 4/5. The polypeptide is Enolase 2 (ENO2) (Saccharomyces cerevisiae (strain ATCC 204508 / S288c) (Baker's yeast)).